The sequence spans 166 residues: Small ribosomal subunit protein uS5 (166 aa).

The S5 DRBM domain occupies leucine 11–valine 74.

It belongs to the universal ribosomal protein uS5 family. Part of the 30S ribosomal subunit. Contacts proteins S4 and S8.

With S4 and S12 plays an important role in translational accuracy. In terms of biological role, located at the back of the 30S subunit body where it stabilizes the conformation of the head with respect to the body. In Tolumonas auensis (strain DSM 9187 / NBRC 110442 / TA 4), this protein is Small ribosomal subunit protein uS5.